The sequence spans 273 residues: Patr class II histocompatibility antigen, DO beta chain (273 aa).

Positions M1 to G26 are cleaved as a signal peptide. Residues T27 to K120 form a beta-1 region. Residues T27–K224 lie on the Extracellular side of the membrane. Disulfide bonds link C41-C105 and C143-C199. N45 is a glycosylation site (N-linked (GlcNAc...) asparagine). The beta-2 stretch occupies residues V121–W214. Residues P123–E213 form the Ig-like C1-type domain. The interval R215–K224 is connecting peptide. The chain crosses the membrane as a helical span at residues M225–I245. At Q246 to C273 the chain is on the cytoplasmic side.

Belongs to the MHC class II family. In terms of assembly, heterodimer of an alpha chain (DOA) and a beta chain (DOB). Forms a heterotetrameric complex with an HLA-DM molecule during intracellular transport in endosomal/lysosomal compartments in B-cells.

It is found in the endosome membrane. It localises to the lysosome membrane. In terms of biological role, important modulator in the HLA class II restricted antigen presentation pathway by interaction with the HLA-DM molecule in B-cells. Modifies peptide exchange activity of HLA-DM. This is Patr class II histocompatibility antigen, DO beta chain (Patr-DOB) from Pan troglodytes (Chimpanzee).